A 382-amino-acid polypeptide reads, in one-letter code: 3-dehydroquinate synthase (382 aa).

NAD(+) contacts are provided by residues 115 to 119 (GVVGD), 139 to 140 (TS), Lys152, and Lys161. The Zn(2+) site is built by Glu194, His256, and His274.

It belongs to the sugar phosphate cyclases superfamily. Dehydroquinate synthase family. It depends on Co(2+) as a cofactor. Zn(2+) is required as a cofactor. Requires NAD(+) as cofactor.

It localises to the cytoplasm. The enzyme catalyses 7-phospho-2-dehydro-3-deoxy-D-arabino-heptonate = 3-dehydroquinate + phosphate. The protein operates within metabolic intermediate biosynthesis; chorismate biosynthesis; chorismate from D-erythrose 4-phosphate and phosphoenolpyruvate: step 2/7. Functionally, catalyzes the conversion of 3-deoxy-D-arabino-heptulosonate 7-phosphate (DAHP) to dehydroquinate (DHQ). The protein is 3-dehydroquinate synthase of Rhodopseudomonas palustris (strain BisB18).